The chain runs to 529 residues: Glutamyl-tRNA(Gln) amidotransferase subunit B-2, chloroplastic/mitochondrial (529 aa).

Residues 17–61 (STRVSLPRGSIPPPPTSSSSSSSSSREGRRPRFFSTTTTSAERPV) form a disordered region.

This sequence belongs to the GatB/GatE family. GatB subfamily. Subunit of the heterotrimeric GatCAB amidotransferase (AdT) complex, composed of A, B and C subunits.

The protein resides in the mitochondrion. It is found in the plastid. Its subcellular location is the chloroplast. It catalyses the reaction L-glutamyl-tRNA(Gln) + L-glutamine + ATP + H2O = L-glutaminyl-tRNA(Gln) + L-glutamate + ADP + phosphate + H(+). Allows the formation of correctly charged Gln-tRNA(Gln) through the transamidation of misacylated Glu-tRNA(Gln) in chloroplasts and mitochondria. The reaction takes place in the presence of glutamine and ATP through an activated gamma-phospho-Glu-tRNA(Gln). The chain is Glutamyl-tRNA(Gln) amidotransferase subunit B-2, chloroplastic/mitochondrial from Micromonas commoda (strain RCC299 / NOUM17 / CCMP2709) (Picoplanktonic green alga).